The following is a 316-amino-acid chain: D-alanine--D-alanine ligase (316 aa).

One can recognise an ATP-grasp domain in the interval 112–310; that stretch reads KTALKAHGLP…FGKLCRWLVE (199 aa). 139 to 189 lines the ATP pocket; sequence MATPYVVKPNNEGSSVGVYLVNEAANGPPHLSDDMPDEVMVETYAPGRELT. 3 residues coordinate Mg(2+): aspartate 261, glutamate 277, and asparagine 279.

It belongs to the D-alanine--D-alanine ligase family. The cofactor is Mg(2+). It depends on Mn(2+) as a cofactor.

It localises to the cytoplasm. It carries out the reaction 2 D-alanine + ATP = D-alanyl-D-alanine + ADP + phosphate + H(+). It participates in cell wall biogenesis; peptidoglycan biosynthesis. In terms of biological role, cell wall formation. In Jannaschia sp. (strain CCS1), this protein is D-alanine--D-alanine ligase.